A 126-amino-acid polypeptide reads, in one-letter code: Small ribosomal subunit protein uS13 (126 aa).

The disordered stretch occupies residues 93-126; the sequence is RRGLPVRGQRTKTNARTRKGPKRTVAGKKKAGRK.

This sequence belongs to the universal ribosomal protein uS13 family. Part of the 30S ribosomal subunit. Forms a loose heterodimer with protein S19. Forms two bridges to the 50S subunit in the 70S ribosome.

Its function is as follows. Located at the top of the head of the 30S subunit, it contacts several helices of the 16S rRNA. In the 70S ribosome it contacts the 23S rRNA (bridge B1a) and protein L5 of the 50S subunit (bridge B1b), connecting the 2 subunits; these bridges are implicated in subunit movement. Contacts the tRNAs in the A and P-sites. This is Small ribosomal subunit protein uS13 from Beutenbergia cavernae (strain ATCC BAA-8 / DSM 12333 / CCUG 43141 / JCM 11478 / NBRC 16432 / NCIMB 13614 / HKI 0122).